The following is a 63-amino-acid chain: Sec-independent protein translocase protein TatA (63 aa).

A helical transmembrane segment spans residues 1–21 (MGGLSVGSVVLIALVALLIFG).

Belongs to the TatA/E family. As to quaternary structure, forms a complex with TatC.

It localises to the cell membrane. Functionally, part of the twin-arginine translocation (Tat) system that transports large folded proteins containing a characteristic twin-arginine motif in their signal peptide across membranes. TatA could form the protein-conducting channel of the Tat system. In Shouchella clausii (strain KSM-K16) (Alkalihalobacillus clausii), this protein is Sec-independent protein translocase protein TatA.